The sequence spans 394 residues: Zinc-regulated GTPase metalloprotein activator 1 (394 aa).

Residues 16 to 23 carry the psi-PxLVp motif motif; it reads EDCPELVP. 48–55 serves as a coordination point for GTP; the sequence is GYLGAGKT. Zn(2+)-binding residues include C106, C108, and C109. Residues 106–109 carry the CXCC motif motif; sequence CLCC. Residues 109 to 113 and 202 to 205 each bind GTP; these read CSVKD and NKTD. The region spanning 272–375 is the CobW C-terminal domain; it reads IVTVTFDVPG…ILQQLFITAV (104 aa).

Belongs to the SIMIBI class G3E GTPase family. ZNG1 subfamily.

It is found in the nucleus. The catalysed reaction is GTP + H2O = GDP + phosphate + H(+). Zinc chaperone that directly transfers zinc cofactor to target metalloproteins, thereby activating them. Catalyzes zinc insertion into the active site of methionine aminopeptidase METAP1, which function to cleave the initiator methionine from polypeptides during or after protein translation. Mechanistically, the N-terminal psi-PxLVp motif binds to the C6H2-type zinc finger of inactive form of METAP1. After formation of the docked complex, zinc is transferred from the CXCC motif in the GTPase domain of ZNG1 to the zinc binding site in the peptidase domain of METAP1 in a process requiring GTP hydrolysis. GTP/GDP exchange is required for release of active METAP1. This chain is Zinc-regulated GTPase metalloprotein activator 1 (Zng1), found in Rattus norvegicus (Rat).